Consider the following 135-residue polypeptide: S-protein homolog 29 (135 aa).

Residues 1–24 (MKNSSKIFVVLSIILFYVISSCHG) form the signal peptide. Asn110 carries N-linked (GlcNAc...) asparagine glycosylation.

Belongs to the plant self-incompatibility (S1) protein family.

The protein resides in the secreted. The sequence is that of S-protein homolog 29 from Arabidopsis thaliana (Mouse-ear cress).